Consider the following 134-residue polypeptide: Transcription antitermination protein NusB (134 aa).

Belongs to the NusB family.

Functionally, involved in transcription antitermination. Required for transcription of ribosomal RNA (rRNA) genes. Binds specifically to the boxA antiterminator sequence of the ribosomal RNA (rrn) operons. The polypeptide is Transcription antitermination protein NusB (Shewanella woodyi (strain ATCC 51908 / MS32)).